The chain runs to 197 residues: NADH-quinone oxidoreductase subunit C (197 aa).

It belongs to the complex I 30 kDa subunit family. In terms of assembly, NDH-1 is composed of 14 different subunits. Subunits NuoB, C, D, E, F, and G constitute the peripheral sector of the complex.

The protein localises to the cell inner membrane. The enzyme catalyses a quinone + NADH + 5 H(+)(in) = a quinol + NAD(+) + 4 H(+)(out). Functionally, NDH-1 shuttles electrons from NADH, via FMN and iron-sulfur (Fe-S) centers, to quinones in the respiratory chain. The immediate electron acceptor for the enzyme in this species is believed to be ubiquinone. Couples the redox reaction to proton translocation (for every two electrons transferred, four hydrogen ions are translocated across the cytoplasmic membrane), and thus conserves the redox energy in a proton gradient. In Caulobacter vibrioides (strain ATCC 19089 / CIP 103742 / CB 15) (Caulobacter crescentus), this protein is NADH-quinone oxidoreductase subunit C.